We begin with the raw amino-acid sequence, 214 residues long: ATP-dependent Clp protease proteolytic subunit (214 aa).

Serine 114 acts as the Nucleophile in catalysis. Histidine 139 is a catalytic residue.

It belongs to the peptidase S14 family. In terms of assembly, fourteen ClpP subunits assemble into 2 heptameric rings which stack back to back to give a disk-like structure with a central cavity, resembling the structure of eukaryotic proteasomes.

It is found in the cytoplasm. The catalysed reaction is Hydrolysis of proteins to small peptides in the presence of ATP and magnesium. alpha-casein is the usual test substrate. In the absence of ATP, only oligopeptides shorter than five residues are hydrolyzed (such as succinyl-Leu-Tyr-|-NHMec, and Leu-Tyr-Leu-|-Tyr-Trp, in which cleavage of the -Tyr-|-Leu- and -Tyr-|-Trp bonds also occurs).. Cleaves peptides in various proteins in a process that requires ATP hydrolysis. Has a chymotrypsin-like activity. Plays a major role in the degradation of misfolded proteins. This chain is ATP-dependent Clp protease proteolytic subunit, found in Nitrosomonas eutropha (strain DSM 101675 / C91 / Nm57).